We begin with the raw amino-acid sequence, 228 residues long: Venom allergen 5 (228 aa).

The N-terminal stretch at 1 to 22 is a signal peptide; it reads MTKIDLLARVFVIATIIALATA. 3 disulfides stabilise this stretch: Cys30/Cys124, Cys51/Cys117, and Cys195/Cys212. Positions 69–214 constitute an SCP domain; sequence KEHNDYGHKV…WNKHFLVCNY (146 aa).

This sequence belongs to the CRISP family. Venom allergen 5-like subfamily. In terms of tissue distribution, expressed by the venom gland.

The protein resides in the secreted. This chain is Venom allergen 5, found in Rhynchium brunneum (Potter wasp).